Consider the following 181-residue polypeptide: Large ribosomal subunit protein uL30 (181 aa).

This sequence belongs to the universal ribosomal protein uL30 family. In terms of assembly, part of the 50S ribosomal subunit.

This is Large ribosomal subunit protein uL30 from Hyperthermus butylicus (strain DSM 5456 / JCM 9403 / PLM1-5).